The sequence spans 266 residues: Ubiquinone biosynthesis protein COQ4 homolog, mitochondrial (266 aa).

Residues histidine 169, aspartate 170, histidine 173, and glutamate 185 each contribute to the Zn(2+) site.

The protein belongs to the COQ4 family. As to quaternary structure, component of a multi-subunit COQ enzyme complex. Requires Zn(2+) as cofactor.

Its subcellular location is the mitochondrion inner membrane. The catalysed reaction is a 4-hydroxy-3-methoxy-5-(all-trans-polyprenyl)benzoate + H(+) = a 2-methoxy-6-(all-trans-polyprenyl)phenol + CO2. It functions in the pathway cofactor biosynthesis; ubiquinone biosynthesis. Functionally, lyase that catalyzes the C1-decarboxylation of 4-hydroxy-3-methoxy-5-(all-trans-polyprenyl)benzoic acid into 2-methoxy-6-(all-trans-polyprenyl)phenol during ubiquinone biosynthesis. This is Ubiquinone biosynthesis protein COQ4 homolog, mitochondrial from Drosophila ananassae (Fruit fly).